Reading from the N-terminus, the 307-residue chain is MSELTKAQQYNFNKLQKKIRRNTGNAIADYNMIEDGDRIMVCLSGGKDSFTMLDILMSLKKSAPISFDLIAVNLDQKQPGFPAHILPEYLEKLGVEYKIVEEDTYSIVQDKIPEGKTTCSLCSRLRRGILYRTAKELGATKIALGHHRDDILETMFLNMFYGGKLKGMPPKLVSDNGEHVVIRPLAYCREKDIIKYADMRDYPIIPCNLCGSQPNMQRQNVKQMLNTWDKQFPGRIETMFTAMQNVVPSHLADFNTFDFKSINRDSGVINGGDIGFDKEEMPTLPVDADDAVAEFDPSLKLDVVNVD.

Positions 44–49 match the PP-loop motif motif; sequence SGGKDS. C119, C122, and C210 together coordinate [4Fe-4S] cluster.

This sequence belongs to the TtcA family. As to quaternary structure, homodimer. The cofactor is Mg(2+). [4Fe-4S] cluster is required as a cofactor.

It is found in the cytoplasm. The catalysed reaction is cytidine(32) in tRNA + S-sulfanyl-L-cysteinyl-[cysteine desulfurase] + AH2 + ATP = 2-thiocytidine(32) in tRNA + L-cysteinyl-[cysteine desulfurase] + A + AMP + diphosphate + H(+). Its pathway is tRNA modification. In terms of biological role, catalyzes the ATP-dependent 2-thiolation of cytidine in position 32 of tRNA, to form 2-thiocytidine (s(2)C32). The sulfur atoms are provided by the cysteine/cysteine desulfurase (IscS) system. This chain is tRNA-cytidine(32) 2-sulfurtransferase, found in Aliivibrio fischeri (strain ATCC 700601 / ES114) (Vibrio fischeri).